The sequence spans 637 residues: Probable membrane transporter protein MamO (637 aa).

The Cytoplasmic portion of the chain corresponds to 1–24; it reads MIEVGETMGELPTNKIVFCERSWK. The chain crosses the membrane as a helical span at residues 25–45; that stretch reads TPVSILAFLIFVTFAWGIYLL. Topologically, residues 46–352 are lumenal; sequence DHYDEDDNFH…AKIGGYSVAD (307 aa). Positions 78 to 268 are protease-like; sequence LYHTVPPAVV…VIVSHLQDVV (191 aa). Residues H148 and H263 each coordinate a divalent metal cation. Residues 353-373 traverse the membrane as a helical segment; it reads IVGLVMLALAAGVTGGMMTMG. The TSUP-like stretch occupies residues 370–637; it reads MTMGGGVLQV…AIALKMLTSV (268 aa). The Cytoplasmic portion of the chain corresponds to 374–378; sequence GGVLQ. The helical transmembrane segment at 379-399 threads the bilayer; the sequence is VAGMMVFFGYGMYLIRPVVFL. The Lumenal portion of the chain corresponds to 400–416; that stretch reads TNVVVYGAASLRNDKAQ. The helical transmembrane segment at 417-437 threads the bilayer; the sequence is LVQWDKVKPLIPWGIAGVILG. Position 438 (Y438) is a topological domain, cytoplasmic. A helical transmembrane segment spans residues 439 to 459; it reads FIGNAIGDSVVGILLGLFALI. Topologically, residues 460–517 are lumenal; the sequence is MAGKAVMEILQPNAGEETAESISATEAEDEMDELMALADGTSRPKASGLALPEGHARS. A helical transmembrane segment spans residues 518–538; that stretch reads AVLGLPMGLFSGILGISGGVI. Residues 539–554 lie on the Cytoplasmic side of the membrane; the sequence is EVPLQRYVGRISLQNA. A helical transmembrane segment spans residues 555 to 575; sequence IANSSVLVFWASVAGSVVAFL. Over 576–586 the chain is Lumenal; that stretch reads HGSSTGLIHWE. The helical transmembrane segment at 587-607 threads the bilayer; that stretch reads APVTLALVMIPGAYVGGIIGA. At 608 to 616 the chain is on the cytoplasmic side; the sequence is RLMRVLPVR. Residues 617 to 637 traverse the membrane as a helical segment; sequence VLKGVYAATMAAIALKMLTSV.

This sequence in the N-terminal section; belongs to the peptidase S1C family. In the C-terminal section; belongs to the 4-toluene sulfonate uptake permease (TSUP) (TC 2.A.102) family. It depends on a metal cation as a cofactor. In terms of processing, subject to proteolytic cleavage by MamE.

It localises to the magnetosome membrane. Functionally, plays 2 roles; promotes magnetite nucleation/formation and activates the MamE protease. Despite its near conservation of a protease-like sequence, this is probably not a protease. Required in conjunction with MamP for proteolysis of at least MamE, itself and MamP. May transport a solute that controls MamE's protease activity. May place individual iron atoms into the magnetite lattice. The sequence is that of Probable membrane transporter protein MamO (mamO) from Paramagnetospirillum magneticum (strain ATCC 700264 / AMB-1) (Magnetospirillum magneticum).